Consider the following 582-residue polypeptide: MAVPGVGLLTRLNLCARRRTRVQRPIVRLLSCPGTVAKDLRRDEQPSGSVETGFEDKIPKRRFSEMQNERREQAQRTVLIHCPEKISENKFLKYLSQFGPINNHFFYESFGLYAVVEFCQKESIGSLQNGTHTPSTAMETAIPFRSRFFNLKLKNQTSERSRVRSSNQLPRSNKQLFELLCYAESIDDQLNTLLKEFQLTEENTKLRYLTCSLIEDMAAAYFPDCIVRPFGSSVNTFGKLGCDLDMFLDLDETRNLSAHKISGNFLMEFQVKNVPSERIATQKILSVLGECLDHFGPGCVGVQKILNARCPLVRFSHQASGFQCDLTTNNRIALTSSELLYIYGALDSRVRALVFSVRCWARAHSLTSSIPGAWITNFSLTMMVIFFLQRRSPPILPTLDSLKTLADAEDKCVIEGNNCTFVRDLSRIKPSQNTETLELLLKEFFEYFGNFAFDKNSINIRQGREQNKPDSSPLYIQNPFETSLNISKNVSQSQLQKFVDLARESAWILQQEDTDRPSISSNRPWGLVSLLLPSAPNRKSFTKKKSNKFAIETVKNLLESLKGNRTENFTKTSGKRTISTQT.

A mitochondrion-targeting transit peptide spans 1-37 (MAVPGVGLLTRLNLCARRRTRVQRPIVRLLSCPGTVA). N6-acetyllysine is present on lysine 90. Residues 107–109 (YES) and 241–242 (GC) contribute to the ATP site. Residues aspartate 243 and aspartate 245 each contribute to the Mg(2+) site. The PAP-associated domain maps to 437–483 (LELLLKEFFEYFGNFAFDKNSINIRQGREQNKPDSSPLYIQNPFETS).

It belongs to the DNA polymerase type-B-like family. Homodimer. Mg(2+) is required as a cofactor. Requires Mn(2+) as cofactor. As to expression, ubiquitous, with stronger expression in tissues with high energy requirements: heart, brain, and skeletal muscle.

It is found in the cytoplasm. Its subcellular location is the mitochondrion. It carries out the reaction RNA(n) + ATP = RNA(n)-3'-adenine ribonucleotide + diphosphate. Its function is as follows. Polymerase that creates the 3' poly(A) tail of mitochondrial transcripts. Can use all four nucleotides, but has higher activity with ATP and UTP (in vitro). Plays a role in replication-dependent histone mRNA degradation. May be involved in the terminal uridylation of mature histone mRNAs before their degradation is initiated. Might be responsible for the creation of some UAA stop codons which are not encoded in mtDNA. This Homo sapiens (Human) protein is Poly(A) RNA polymerase, mitochondrial (MTPAP).